We begin with the raw amino-acid sequence, 24 residues long: Pandinin-2 (24 aa).

Homooligomer. In terms of tissue distribution, expressed by the venom gland.

It localises to the secreted. The protein resides in the target cell membrane. Functionally, disrupts cell membranes through formation of pores. Has strong antimicrobial activity against Gram-positive bacteria B.subtilis, S.epidermidis, E.faecalis and S.aureus. Is less active against Gram-negative bacteria P.aeruginosa and E.coli. Also increases efficacy of antibiotics (ampicillin, chloramphenicol, streptomycin, kanamycin, novobiocin) when tested against E.coli, probably by facilitating their incorporation into the bacteria. Possesses antifungal activity against C.albicans and hemolytic activity against human, sheep and pig erythrocytes. The sequence is that of Pandinin-2 from Pandinus imperator (Emperor scorpion).